We begin with the raw amino-acid sequence, 302 residues long: MGMIGSGLLLIDKPGGWTSHDVVARVRRLAGTRKVGHAGTLDPMATGLLVLGLNSSTRLLTYIVGAEKEYVGTIRLGAATTTDDIEGEILERAEPAALAAVAESSIAEGIAALTGEIEQVPSAVSAVKVDGKRAYARVRAGEEVVLPARAVTVSAFRLLSERREQDAIDLEVRVVCSSGTYIRSLARDLGARLGVGGHLAALRRTRVGGYDVRRAHELATLEPAAALIPATEAASSLFERLRLTEQQATDLAHGKRLHLAGWEGPRGEPVAAIAPSGSLVGLIEFRGKEARTLVNFPADEIA.

The Nucleophile role is filled by Asp-42.

This sequence belongs to the pseudouridine synthase TruB family. Type 1 subfamily.

The catalysed reaction is uridine(55) in tRNA = pseudouridine(55) in tRNA. In terms of biological role, responsible for synthesis of pseudouridine from uracil-55 in the psi GC loop of transfer RNAs. The protein is tRNA pseudouridine synthase B of Leifsonia xyli subsp. xyli (strain CTCB07).